Reading from the N-terminus, the 386-residue chain is MNIHEYQAKEILRKYGVPTSTGLVVTKTEKINETIDKLNTEVYVVKAQIHAGGRGKAGGVKVVKSKEEAKKVAHDMFGINLVTHQTGPQGQKVNRLYIESGCDILKEYYFSIVFDRSASCITFIASTEGGIDIEAVAEKTPDKIIKFSVDPATGLQDFHMRGIAYELGFKDNQAKQMKEIVKSVYNAFIETDATQIEINPLIVNSDGNLLALDAKITFDDNGLFRHPNITAMRDHDEEDPLETRAANAGLSYVKMDGNIGCMVNGAGLAMATMDIIKLYGASPANFLDVGGGADRERVKEALKIILSDKEVQGILVNIFGGIMRCDIIAEGIIAAAKDIGIKVPLVVRLAGTNVEKGEEILSNSGLAIIPAHDLADAANKIVEAIR.

Residues 9-244 (KEILRKYGVP…HDEEDPLETR (236 aa)) form the ATP-grasp domain. ATP is bound by residues Lys-46, 53–55 (GRG), Glu-99, Cys-102, and Glu-107. The Mg(2+) site is built by Asn-199 and Asp-213. Substrate is bound by residues Asn-264 and 321-323 (GIM).

This sequence belongs to the succinate/malate CoA ligase beta subunit family. In terms of assembly, heterotetramer of two alpha and two beta subunits. The cofactor is Mg(2+).

The catalysed reaction is succinate + ATP + CoA = succinyl-CoA + ADP + phosphate. It catalyses the reaction GTP + succinate + CoA = succinyl-CoA + GDP + phosphate. It participates in carbohydrate metabolism; tricarboxylic acid cycle; succinate from succinyl-CoA (ligase route): step 1/1. Its function is as follows. Succinyl-CoA synthetase functions in the citric acid cycle (TCA), coupling the hydrolysis of succinyl-CoA to the synthesis of either ATP or GTP and thus represents the only step of substrate-level phosphorylation in the TCA. The beta subunit provides nucleotide specificity of the enzyme and binds the substrate succinate, while the binding sites for coenzyme A and phosphate are found in the alpha subunit. In Rickettsia conorii (strain ATCC VR-613 / Malish 7), this protein is Succinate--CoA ligase [ADP-forming] subunit beta.